Consider the following 200-residue polypeptide: Protein GrpE (200 aa).

The disordered stretch occupies residues aspartate 15 to glutamate 47. The span at leucine 16–glutamate 47 shows a compositional bias: acidic residues.

It belongs to the GrpE family. In terms of assembly, homodimer.

It is found in the cytoplasm. In terms of biological role, participates actively in the response to hyperosmotic and heat shock by preventing the aggregation of stress-denatured proteins, in association with DnaK and GrpE. It is the nucleotide exchange factor for DnaK and may function as a thermosensor. Unfolded proteins bind initially to DnaJ; upon interaction with the DnaJ-bound protein, DnaK hydrolyzes its bound ATP, resulting in the formation of a stable complex. GrpE releases ADP from DnaK; ATP binding to DnaK triggers the release of the substrate protein, thus completing the reaction cycle. Several rounds of ATP-dependent interactions between DnaJ, DnaK and GrpE are required for fully efficient folding. The protein is Protein GrpE of Clostridium tetani (strain Massachusetts / E88).